A 212-amino-acid chain; its full sequence is Ependymin (212 aa).

The first 20 residues, M1–A20, serve as a signal peptide directing secretion. 3 N-linked (GlcNAc...) asparagine glycosylation sites follow: N69, N92, and N112.

Belongs to the ependymin family. In terms of assembly, forms disulfide-linked dimers. Post-translationally, binds calcium through the terminal sialic acids. EPDs are synthesized in the meninx and secreted in the cerebrospinal fluid.

It is found in the secreted. Its function is as follows. May play a role in neural plasticity. May be involved during axon regeneration. The protein is Ependymin (epd) of Clupea harengus (Atlantic herring).